The primary structure comprises 512 residues: MSRLFLVLDTGAAVLLVALLFVVYRGRQSARGPLPPGPRGWPLVGNVFDMPSTNEWNTYMSWGEKWGDIVSVTLFGQHIVILNSVQHAYDMFEKKSNIYSDRPVITMAGEMVGWDRTLAVLRYGKRFRETRKLFSQLIGTRNHAERFSHHLEHEVHQFLRRVLREPTSLLKEVRKTTGAVILKMAYGYEVQEGDDPLVDLVDRAVEEFSISTRPGAFLVDTLPVLRHVPAWIPGAGWKKKAQVWADDLEMTCNVPYAFTQQQMSAGTAIPSFTSAHLESNPDPEQEILIKNAAASLYSAGADTTVSAVSTFFLAMTCYPEAQRKAQAEIDAVIGNDRLPTLADRDKLPYVTALCWEVLRWQPVVPLGFPHCPVKDDIHAGYLIPKGTLVSPNIWKFLHDPDTYANPFDFEPERFIASPGKTAEKDPRQIVFGFGRRICPGMYLADASLFISCAMSLAVFDISKVVRDGKVIEPVIDYTSGTISHPRPFECSIKPRSANAEVLITAMHETREK.

A helical membrane pass occupies residues 4–24 (LFLVLDTGAAVLLVALLFVVY). C438 is a binding site for heme.

The protein belongs to the cytochrome P450 family. The cofactor is heme.

The protein resides in the membrane. It functions in the pathway secondary metabolite biosynthesis. Its function is as follows. Cytochrome P450 monooxygenase that is able to use 7-ethoxycoumarin as a substrate for oxidation. The sequence is that of Cytochrome P450 monooxygenase 208 from Postia placenta (strain ATCC 44394 / Madison 698-R) (Brown rot fungus).